An 892-amino-acid polypeptide reads, in one-letter code: Transmembrane channel-like protein 2-B (892 aa).

Residues 29 to 125 (GINQNLRREE…DESMSEGEMA (97 aa)) form a disordered region. Basic residues-rich tracts occupy residues 48 to 58 (RRAKKRRMNRR) and 66 to 77 (RSKKMRMRVRKN). Residues 103–112 (PSSCSSSSDN) show a composition bias toward low complexity. Helical transmembrane passes span 235-255 (LVLF…MGIP), 275-295 (FSVL…YGFY), 308-328 (LPLS…MVVI), 403-423 (LANV…YAVV), 444-464 (EVEI…EAIA), 482-502 (IFAL…DEVN), 616-636 (LIFN…LVGI), 671-691 (FYMG…IYSI), and 736-756 (GLII…LNAV). Positions 772 to 785 (QMQRDEEKNRRNNK) are enriched in basic and acidic residues. 2 disordered regions span residues 772-791 (QMQR…TNQV) and 796-892 (EDLL…PPRR). Residues 862–878 (PRQPGPLPGNPRGPPPG) show a composition bias toward pro residues.

Belongs to the TMC family. In adults, expression is restricted to the hair cells of inner ear and lateral line organ. Expressed at higher levels in the larval lateral-line neuromasts than in the larval inner ear.

It is found in the membrane. Its function is as follows. Probable component of the mechanotransducer (MET) non-selective cation channel. In Danio rerio (Zebrafish), this protein is Transmembrane channel-like protein 2-B.